Consider the following 306-residue polypeptide: Putative S-adenosyl-L-methionine-dependent methyltransferase Mvan_1345 (306 aa).

Residues D134 and 163–164 contribute to the S-adenosyl-L-methionine site; that span reads DL.

Belongs to the UPF0677 family.

Its function is as follows. Exhibits S-adenosyl-L-methionine-dependent methyltransferase activity. This Mycolicibacterium vanbaalenii (strain DSM 7251 / JCM 13017 / BCRC 16820 / KCTC 9966 / NRRL B-24157 / PYR-1) (Mycobacterium vanbaalenii) protein is Putative S-adenosyl-L-methionine-dependent methyltransferase Mvan_1345.